Reading from the N-terminus, the 673-residue chain is Ion-translocating oxidoreductase complex subunit C (673 aa).

2 4Fe-4S ferredoxin-type domains span residues 368-397 and 407-436; these read MGAP…QQLY and KATA…VQYF. 8 residues coordinate [4Fe-4S] cluster: Cys-377, Cys-380, Cys-383, Cys-387, Cys-416, Cys-419, Cys-422, and Cys-426. The interval 529-554 is disordered; sequence EARKAQARAKQAGHPMADSATSGDDP.

The protein belongs to the 4Fe4S bacterial-type ferredoxin family. RnfC subfamily. In terms of assembly, the complex is composed of six subunits: RsxA, RsxB, RsxC, RsxD, RsxE and RsxG. [4Fe-4S] cluster is required as a cofactor.

The protein resides in the cell inner membrane. In terms of biological role, part of a membrane-bound complex that couples electron transfer with translocation of ions across the membrane. Required to maintain the reduced state of SoxR. The protein is Ion-translocating oxidoreductase complex subunit C of Salmonella arizonae (strain ATCC BAA-731 / CDC346-86 / RSK2980).